Here is a 320-residue protein sequence, read N- to C-terminus: Ferrochelatase (320 aa).

H194 and E275 together coordinate Fe cation.

Belongs to the ferrochelatase family.

It is found in the cytoplasm. It catalyses the reaction heme b + 2 H(+) = protoporphyrin IX + Fe(2+). It participates in porphyrin-containing compound metabolism; protoheme biosynthesis; protoheme from protoporphyrin-IX: step 1/1. Catalyzes the ferrous insertion into protoporphyrin IX. This chain is Ferrochelatase, found in Xylella fastidiosa (strain M23).